Reading from the N-terminus, the 979-residue chain is Translation initiation factor IF-2 (979 aa).

Residues 68–392 (VKQKQGTPAS…SRAAQDAMEL (325 aa)) form a disordered region. 3 stretches are compositionally biased toward basic and acidic residues: residues 102-179 (QDMR…KPEE), 217-229 (EMEK…EVFR), and 260-273 (TKED…DADG). Residues 309–326 (PSGNKNNNRPAQQQSNAS) are compositionally biased toward polar residues. The segment covering 347–356 (DVQRQVKETL) has biased composition (basic and acidic residues). A tr-type G domain is found at 478 to 646 (ARPPIVTVMG…KVLLEADILE (169 aa)). The tract at residues 487–494 (GHVDHGKT) is G1. A GTP-binding site is contributed by 487-494 (GHVDHGKT). Positions 512–516 (GITQH) are G2. The tract at residues 534 to 537 (DTPG) is G3. GTP contacts are provided by residues 534–538 (DTPGH) and 588–591 (NKID). The tract at residues 588–591 (NKID) is G4. Positions 624-626 (SAK) are G5.

Belongs to the TRAFAC class translation factor GTPase superfamily. Classic translation factor GTPase family. IF-2 subfamily.

The protein resides in the cytoplasm. Functionally, one of the essential components for the initiation of protein synthesis. Protects formylmethionyl-tRNA from spontaneous hydrolysis and promotes its binding to the 30S ribosomal subunits. Also involved in the hydrolysis of GTP during the formation of the 70S ribosomal complex. This Porphyromonas gingivalis (strain ATCC 33277 / DSM 20709 / CIP 103683 / JCM 12257 / NCTC 11834 / 2561) protein is Translation initiation factor IF-2.